A 441-amino-acid polypeptide reads, in one-letter code: Inner kinetochore subunit mis17 (441 aa).

A compositionally biased stretch (polar residues) spans 160–173 (SSILENSPPNKVQR). The interval 160-240 (SSILENSPPN…TSSMAPRNLL (81 aa)) is disordered. The span at 174–183 (LSSLDSSQDS) shows a compositional bias: low complexity. The segment covering 192 to 201 (VTGTTFSSQA) has biased composition (polar residues). Residues 217–233 (SLTNQSSSLQSSLQTSS) are compositionally biased toward low complexity.

This sequence belongs to the CENP-U/AME1 family. In terms of assembly, component of the heterotetrameric kinetochore subcomplex COMA, which consists of fta2, fta7, mal2 and mis17. The COMA subcomplex is part of a larger constitutive centromere-associated network (CCAN) (also known as central kinetochore Sim4 complex in fission yeast), which is composed of at least cnl2, cnp3, cnp20, fta1, fta2, fta3, fta4, fta6, fta7, mal2, mhf1, mhf2, mis6, mis15, mis17, sim4 and wip1. Interacts with mis6 and mis15.

It localises to the nucleus. The protein localises to the chromosome. The protein resides in the centromere. It is found in the kinetochore. In terms of biological role, component of the kinetochore, a multiprotein complex that assembles on centromeric DNA and attaches chromosomes to spindle microtubules, mediating chromosome segregation and sister chromatid segregation during meiosis and mitosis. Component of the inner kinetochore COMA complex, which connects centromere-associated proteins and the outer kinetochore. COMA interacts with other inner kinetochore proteins to form the inner kinetochore constitutive centromere-associated network (CCAN), which serves as a structural platform for outer kinetochore assembly. In Schizosaccharomyces pombe (strain 972 / ATCC 24843) (Fission yeast), this protein is Inner kinetochore subunit mis17 (mis17).